Reading from the N-terminus, the 102-residue chain is NADH-quinone oxidoreductase subunit K (102 aa).

Transmembrane regions (helical) follow at residues 5 to 25 (LGHFLSLGAMLFALSVIGIFL), 31 to 51 (IVLLMAIELMLLAVNMNFVAF), and 62 to 82 (VFVFFILTVAAAESAIGLAIL).

This sequence belongs to the complex I subunit 4L family. In terms of assembly, NDH-1 is composed of 14 different subunits. Subunits NuoA, H, J, K, L, M, N constitute the membrane sector of the complex.

The protein localises to the cell inner membrane. The enzyme catalyses a quinone + NADH + 5 H(+)(in) = a quinol + NAD(+) + 4 H(+)(out). In terms of biological role, NDH-1 shuttles electrons from NADH, via FMN and iron-sulfur (Fe-S) centers, to quinones in the respiratory chain. The immediate electron acceptor for the enzyme in this species is believed to be ubiquinone. Couples the redox reaction to proton translocation (for every two electrons transferred, four hydrogen ions are translocated across the cytoplasmic membrane), and thus conserves the redox energy in a proton gradient. This Paracidovorax citrulli (strain AAC00-1) (Acidovorax citrulli) protein is NADH-quinone oxidoreductase subunit K.